The sequence spans 434 residues: MPCRTLTYSSEADWQGIRDMLCGRENPENSVEPVVREIMDAIRSDGDAALAGYTRRFDCPDFDPSSLRVAPDAIEKAAREIPRHDLQIITEAADNIRHFHSAQKEEAWFITRPDGTVLGQMTRPVDSAGLYVPGGQGGNTPLISSLLMNAVPAQVAGVPRIAVTTPPRKDGTLNPYILAAAHVLGLDEIYCAGSAWAVAALAYGTQTIAPVDFIAGPGNIFVTTAKRMLIGTVGIDMIAGPSEILIIADSQADAAHVAADMLSQAEHDPLASAILVTPSPQLAAAVHTELEKQVTGLDRADIARASLRDWSAIVVTPDLNSAVELSNKVAPEHLELLVQDTWGLLGSIRNAGAIFMGPHSPEPVGDYFAGPNHVLPTMGTARFSSALSVQSFCKKSSIIAASQTFTQTNAAKIARLARLEGLEAHARSVESRLS.

Residues serine 242, glutamine 264, and histidine 267 each coordinate substrate. The Zn(2+) site is built by glutamine 264 and histidine 267. Residues glutamate 332 and histidine 333 each act as proton acceptor in the active site. 4 residues coordinate substrate: histidine 333, aspartate 366, glutamate 420, and histidine 425. Aspartate 366 provides a ligand contact to Zn(2+). Histidine 425 serves as a coordination point for Zn(2+).

The protein belongs to the histidinol dehydrogenase family. Requires Zn(2+) as cofactor.

The catalysed reaction is L-histidinol + 2 NAD(+) + H2O = L-histidine + 2 NADH + 3 H(+). The protein operates within amino-acid biosynthesis; L-histidine biosynthesis; L-histidine from 5-phospho-alpha-D-ribose 1-diphosphate: step 9/9. In terms of biological role, catalyzes the sequential NAD-dependent oxidations of L-histidinol to L-histidinaldehyde and then to L-histidine. This is Histidinol dehydrogenase from Oleidesulfovibrio alaskensis (strain ATCC BAA-1058 / DSM 17464 / G20) (Desulfovibrio alaskensis).